The sequence spans 367 residues: MEDPSNPQPNQSNLSQCPPLATAPTPAPVRGPYHRRAHSEVQFRLPEDLDLSEPFGGFDELGSEDDLFCSYMDIEKLGSGSGSASDSAGPSAPRSDNPFSAENGGAEAGNSRPRHRHSLSVDGSSTLESIEAKKAMAPDKLAELWVVDPKRAKRIIANRQSAARSKERKARYILELERKVQTLQTEATTLSAQLSLFQRDTTGLSSENTELKLRLQVMEQQAKLRDALNEQLKKEVERLKFATGEVSPADAYNLGMAHMQYQQQPQQSFFQHHHQQQTDAQNLQQMTHQFHLFQPNNNQNQSSRTNPPTAHQLMHHATSNAPAQSHSYSEAMHEDHLGRLQGLDISSCGRGSNFGRSDTVSESSSTM.

Residues 1–57 are disordered; the sequence is MEDPSNPQPNQSNLSQCPPLATAPTPAPVRGPYHRRAHSEVQFRLPEDLDLSEPFGG. Positions 38 to 47 are enriched in basic and acidic residues; it reads HSEVQFRLPE. Position 70 is a phosphoserine (S70). Residues 79-124 are disordered; sequence SGSGSASDSAGPSAPRSDNPFSAENGGAEAGNSRPRHRHSLSVDGS. Residues 82–96 are compositionally biased toward low complexity; sequence GSASDSAGPSAPRSD. Residues 148–211 enclose the bZIP domain; it reads DPKRAKRIIA…TGLSSENTEL (64 aa). Positions 150–171 are basic motif; the sequence is KRAKRIIANRQSAARSKERKAR. Positions 166 to 245 form a coiled coil; it reads KERKARYILE…VERLKFATGE (80 aa). The segment at 176–190 is leucine-zipper; the sequence is LERKVQTLQTEATTL. 3 stretches are compositionally biased toward polar residues: residues 294-309, 317-328, and 354-367; these read QPNNNQNQSSRTNPPT, ATSNAPAQSHSY, and FGRSDTVSESSSTM. 2 disordered regions span residues 294 to 330 and 343 to 367; these read QPNNNQNQSSRTNPPTAHQLMHHATSNAPAQSHSYSE and LDISSCGRGSNFGRSDTVSESSSTM.

As to quaternary structure, interacts with NEAP1. Forms homodimer and heterodimer with bZIP34 and bZIP61. In terms of tissue distribution, ubiquitous. Strongly expressed in mature pollen.

Its subcellular location is the nucleus. The protein resides in the nucleoplasm. The protein localises to the cytoplasm. It is found in the perinuclear region. Its function is as follows. Transcription factor that may participate with bZIP34 in the gametophytic control of pollen development. The protein is bZIP transcription factor 18 of Arabidopsis thaliana (Mouse-ear cress).